We begin with the raw amino-acid sequence, 995 residues long: Polynucleotide 5'-hydroxyl-kinase NOL9 (995 aa).

Disordered regions lie at residues 18 to 173 and 271 to 359; these read EQRE…SSMK and IKVF…YEPP. Low complexity-rich tracts occupy residues 75 to 94 and 110 to 129; these read TAGAKRPLSNNVSNPDSSPS and VNKSSNVAAKKSAATSKSAK. The segment covering 279–354 has biased composition (acidic residues); the sequence is EETDSDEDDI…DIFDTDDLDS (76 aa). 639 to 646 is a binding site for ATP; sequence GGKGVGKS.

The protein belongs to the Clp1 family. NOL9/GRC3 subfamily.

Its subcellular location is the nucleus. It is found in the nucleolus. Its function is as follows. Polynucleotide 5'-kinase involved in rRNA processing. This chain is Polynucleotide 5'-hydroxyl-kinase NOL9, found in Drosophila melanogaster (Fruit fly).